We begin with the raw amino-acid sequence, 319 residues long: MWKVIIRRILLMIPQLFILSILVFFFAKLMPGDPFSGLIGPHTDPHEVEALRRAAGLYDPWWEQYLRWLGNAIHGNLGMSYNLKEPVMTVIGHRAINTFWMSLLSVILTYLFAIPMSIVAARNEGKWQDQLWLTYNSITFGIPPYVFYLLIIFIFGYSLNWFPTGGTVSPDAMGIIPVFFSKIYHMILPAFSLAVFGTVGIFTYFRSGILDEQTQDYVRTARAKGVKEKVIFRRHILRNASLPIASNFGFVITGLLGGAIFAETIFGYPGLGQLFITSISGRDYSMITALILLNGFLGLLGALLSDIIMAMVDPRIRIQ.

Transmembrane regions (helical) follow at residues 9-29, 99-119, 137-157, 183-203, 248-268, and 289-309; these read ILLMIPQLFILSILVFFFAKL, FWMSLLSVILTYLFAIPMSIV, SITFGIPPYVFYLLIIFIFGY, IYHMILPAFSLAVFGTVGIFT, FGFVITGLLGGAIFAETIFGY, and ALILLNGFLGLLGALLSDIIM. The ABC transmembrane type-1 domain maps to 95-305; the sequence is AINTFWMSLL…FLGLLGALLS (211 aa).

It belongs to the binding-protein-dependent transport system permease family. OppBC subfamily. The complex is composed of two ATP-binding proteins (OppD and OppF), two transmembrane proteins (OppB and OppC) and a solute-binding protein (OppA).

It is found in the cell membrane. In terms of biological role, part of the ABC transporter complex OppABCDF involved in the uptake of oligopeptides. Probably responsible for the translocation of the substrate across the membrane. Essential for uptake of peptides larger than three amino acids and for growth in milk. This chain is Oligopeptide transport system permease protein OppB (oppB), found in Lactococcus lactis subsp. lactis (strain IL1403) (Streptococcus lactis).